Consider the following 502-residue polypeptide: Glutamate--tRNA ligase (502 aa).

Residues 12-22 (PSPTGYLHVGG) carry the 'HIGH' region motif. Residues 259-263 (KLSKR) carry the 'KMSKS' region motif. Residue Lys-262 participates in ATP binding.

It belongs to the class-I aminoacyl-tRNA synthetase family. Glutamate--tRNA ligase type 1 subfamily. Monomer.

It localises to the cytoplasm. The catalysed reaction is tRNA(Glu) + L-glutamate + ATP = L-glutamyl-tRNA(Glu) + AMP + diphosphate. Catalyzes the attachment of glutamate to tRNA(Glu) in a two-step reaction: glutamate is first activated by ATP to form Glu-AMP and then transferred to the acceptor end of tRNA(Glu). This is Glutamate--tRNA ligase from Pelodictyon phaeoclathratiforme (strain DSM 5477 / BU-1).